A 179-amino-acid polypeptide reads, in one-letter code: Cytochrome c-type biogenesis protein CcmE (179 aa).

Topologically, residues 1-8 are cytoplasmic; sequence MTPRRKSR. Residues 9–29 traverse the membrane as a helical; Signal-anchor for type II membrane protein segment; the sequence is MTVILFVLLGISIASALVLYA. The Periplasmic portion of the chain corresponds to 30–179; the sequence is LRQNIDLFYT…QKTSMQEGQK (150 aa). 2 residues coordinate heme: His131 and Tyr135. Residues 151-179 are disordered; that stretch reads MGVADLKGESERDRQEKAYQKTSMQEGQK. The span at 156–169 shows a compositional bias: basic and acidic residues; sequence LKGESERDRQEKAY. The span at 170–179 shows a compositional bias: polar residues; sequence QKTSMQEGQK.

This sequence belongs to the CcmE/CycJ family.

It localises to the cell inner membrane. Functionally, heme chaperone required for the biogenesis of c-type cytochromes. Transiently binds heme delivered by CcmC and transfers the heme to apo-cytochromes in a process facilitated by CcmF and CcmH. This chain is Cytochrome c-type biogenesis protein CcmE, found in Pasteurella multocida (strain Pm70).